A 257-amino-acid polypeptide reads, in one-letter code: Geranylgeranylglyceryl phosphate synthase (257 aa).

Mg(2+) is bound by residues D27 and T57. Sn-glycerol 1-phosphate contacts are provided by residues 175–181, 207–208, and 229–230; these read YLEAGSG, GG, and GN.

It belongs to the GGGP/HepGP synthase family. Group II subfamily. Requires Mg(2+) as cofactor.

It is found in the cytoplasm. The catalysed reaction is sn-glycerol 1-phosphate + (2E,6E,10E)-geranylgeranyl diphosphate = sn-3-O-(geranylgeranyl)glycerol 1-phosphate + diphosphate. It functions in the pathway membrane lipid metabolism; glycerophospholipid metabolism. In terms of biological role, prenyltransferase that catalyzes the transfer of the geranylgeranyl moiety of geranylgeranyl diphosphate (GGPP) to the C3 hydroxyl of sn-glycerol-1-phosphate (G1P). This reaction is the first ether-bond-formation step in the biosynthesis of archaeal membrane lipids. This is Geranylgeranylglyceryl phosphate synthase from Sulfolobus acidocaldarius (strain ATCC 33909 / DSM 639 / JCM 8929 / NBRC 15157 / NCIMB 11770).